Consider the following 288-residue polypeptide: Eukaryotic translation initiation factor 3 subunit G (288 aa).

Residues 1–33 form a disordered region; it reads MSRVANNRDWADDEDLEDSNELPQSTTTTNKDG. Acidic residues predominate over residues 11–20; that stretch reads ADDEDLEDSN. Positions 21 to 33 are enriched in polar residues; it reads ELPQSTTTTNKDG. The RRM domain occupies 208 to 286; the sequence is ATLRVTNVSE…LILRVEFAKK (79 aa).

This sequence belongs to the eIF-3 subunit G family. In terms of assembly, component of the eukaryotic translation initiation factor 3 (eIF-3) complex.

Its subcellular location is the cytoplasm. In terms of biological role, RNA-binding component of the eukaryotic translation initiation factor 3 (eIF-3) complex, which is involved in protein synthesis of a specialized repertoire of mRNAs and, together with other initiation factors, stimulates binding of mRNA and methionyl-tRNAi to the 40S ribosome. The eIF-3 complex specifically targets and initiates translation of a subset of mRNAs involved in cell proliferation. This subunit can bind 18S rRNA. This Sclerotinia sclerotiorum (strain ATCC 18683 / 1980 / Ss-1) (White mold) protein is Eukaryotic translation initiation factor 3 subunit G (tif35).